Consider the following 607-residue polypeptide: Glutamine--fructose-6-phosphate aminotransferase [isomerizing] (607 aa).

The active-site Nucleophile; for GATase activity is C2. The 217-residue stretch at 2-218 (CGIIGYSGSK…DGDVVLVTKD (217 aa)) folds into the Glutamine amidotransferase type-2 domain. SIS domains lie at 280–424 (FDEQ…KLGK) and 457–597 (IAKK…VDKP). K602 serves as the catalytic For Fru-6P isomerization activity.

As to quaternary structure, homodimer.

It localises to the cytoplasm. It catalyses the reaction D-fructose 6-phosphate + L-glutamine = D-glucosamine 6-phosphate + L-glutamate. In terms of biological role, catalyzes the first step in hexosamine metabolism, converting fructose-6P into glucosamine-6P using glutamine as a nitrogen source. The chain is Glutamine--fructose-6-phosphate aminotransferase [isomerizing] from Fusobacterium nucleatum subsp. nucleatum (strain ATCC 25586 / DSM 15643 / BCRC 10681 / CIP 101130 / JCM 8532 / KCTC 2640 / LMG 13131 / VPI 4355).